The sequence spans 129 residues: Glycine cleavage system H protein (129 aa).

The Lipoyl-binding domain occupies 24-106; the sequence is TYTVGITEHA…YAGGWIFKIK (83 aa). Lysine 65 carries the post-translational modification N6-lipoyllysine.

It belongs to the GcvH family. In terms of assembly, the glycine cleavage system is composed of four proteins: P, T, L and H. (R)-lipoate is required as a cofactor.

The glycine cleavage system catalyzes the degradation of glycine. The H protein shuttles the methylamine group of glycine from the P protein to the T protein. This Escherichia coli O7:K1 (strain IAI39 / ExPEC) protein is Glycine cleavage system H protein.